The primary structure comprises 1342 residues: DNA-directed RNA polymerase subunit beta (1342 aa).

N6-acetyllysine is present on residues Lys-1022 and Lys-1200.

It belongs to the RNA polymerase beta chain family. The RNAP catalytic core consists of 2 alpha, 1 beta, 1 beta' and 1 omega subunit. When a sigma factor is associated with the core the holoenzyme is formed, which can initiate transcription.

It catalyses the reaction RNA(n) + a ribonucleoside 5'-triphosphate = RNA(n+1) + diphosphate. Its function is as follows. DNA-dependent RNA polymerase catalyzes the transcription of DNA into RNA using the four ribonucleoside triphosphates as substrates. This chain is DNA-directed RNA polymerase subunit beta, found in Escherichia coli O81 (strain ED1a).